A 357-amino-acid polypeptide reads, in one-letter code: UPF0324 membrane protein BMEI1914 (357 aa).

A run of 11 helical transmembrane segments spans residues 29–48 (NILPGLGLSVAITAAAMVLE), 58–77 (AWLEALVIAILLGTAVRSLA), 90–112 (SAKLLLEIAVVLLGASISASAVI), 117–136 (GLIFGIAAVVAVAITLSYGI), 149–171 (LVACGNSICGNSAIAAMAPVIGA), 181–203 (AFTAILGVIVVLTLPLLVPLLGL), 210–232 (ILAGLTVYAVPQVLAATAPVSLL), 242–261 (LVRVLMLGPVILVFALISGN), 268–290 (PGFFQLVPWFIIGFLAMMALHSL), 300–322 (AIQYASMLLTIISMAALGLGVDI), and 334–356 (LTAILSLIALCCISLGLIHMLGV).

The protein belongs to the UPF0324 family.

Its subcellular location is the cell membrane. The chain is UPF0324 membrane protein BMEI1914 from Brucella melitensis biotype 1 (strain ATCC 23456 / CCUG 17765 / NCTC 10094 / 16M).